The sequence spans 330 residues: MSRRYDTIKHLGEGQFANVYLAQDLESGECVAIKKIKLGSREEAKDGINRTAIREIKLLKEIHHDNIIGLRDVIGHRTSIQLVFDFMDTDLEHVIKDKEIILMPAHIKNITMQMLLGLEFLHVHWILHRDLKPNNLLMNKMGRVKLTDFGLARFFGSPNRNYTHQVVTRWYRAPELLFGARSYGVGIDIWSVGCIIAELLLRNPIFPGESDIDQLVKIFNILGCPTPETWPNMTEMNSYVIIKPQTEYMALNYYFSAAPQDLLDLMAGMWTFDPIKRLTCTQSLQMEYFRTQPFCCLDEELPLPKKQQPQKRSRRLDDDGTRPVRRLNFD.

The 285-residue stretch at 5–289 (YDTIKHLGEG…CTQSLQMEYF (285 aa)) folds into the Protein kinase domain. ATP is bound by residues 11–19 (LGEGQFANV) and Lys-34. The active-site Proton acceptor is Asp-130. A Phosphothreonine modification is found at Thr-163. The segment at 305 to 330 (KKQQPQKRSRRLDDDGTRPVRRLNFD) is disordered. The span at 315-330 (RLDDDGTRPVRRLNFD) shows a compositional bias: basic and acidic residues.

The protein belongs to the protein kinase superfamily. CMGC Ser/Thr protein kinase family. CDC2/CDKX subfamily. As to quaternary structure, catalytic component which, in association with cyclin H (cyh-1) and mat1, is likely to form the CAK complex.

It carries out the reaction L-seryl-[protein] + ATP = O-phospho-L-seryl-[protein] + ADP + H(+). The enzyme catalyses L-threonyl-[protein] + ATP = O-phospho-L-threonyl-[protein] + ADP + H(+). It catalyses the reaction [DNA-directed RNA polymerase] + ATP = phospho-[DNA-directed RNA polymerase] + ADP + H(+). Functionally, serine/threonine kinase involved in cell cycle control and in RNA polymerase II-mediated RNA transcription. Required for maintaining chromosome ploidy. May phosphorylate the large subunit of RNA polymerase II, ama-1. The protein is Cyclin-dependent kinase 7 of Caenorhabditis elegans.